The sequence spans 297 residues: Lymphocyte antigen 6 complex locus protein G6f (297 aa).

The signal sequence occupies residues 1–16; the sequence is MAVLFLLLFLCGTPQA. An Ig-like V-type domain is found at 17-122; the sequence is ADNMQAIYVA…HNYQNWRVYD (106 aa). The Extracellular portion of the chain corresponds to 17–235; that stretch reads ADNMQAIYVA…APSTGWDMPW (219 aa). Cysteines 35 and 106 form a disulfide. N-linked (GlcNAc...) asparagine glycosylation is present at Asn88. Residues 236–256 traverse the membrane as a helical segment; sequence ILMLLLTMGQGVVILALSIVL. Residues 257-297 lie on the Cytoplasmic side of the membrane; that stretch reads WRQRVRGAPGRDASIPQFKPEIQVYENIHLARLGPPAHKPR. Tyr281 carries the phosphotyrosine modification.

In terms of assembly, homodimer; disulfide-linked. Interacts with GRB2 and GRB7 in a phosphorylation-dependent manner. In terms of processing, N-glycosylated.

It is found in the cell membrane. May play a role in the downstream signal transduction pathways involving GRB2 and GRB7. This is Lymphocyte antigen 6 complex locus protein G6f (LY6G6F) from Homo sapiens (Human).